The chain runs to 946 residues: Atos homolog protein A (946 aa).

The segment at 24-32 (ALLITEGRT) is transactivation domain 1 (TAD1). The span at 34-43 (EHSVKGRTEG) shows a compositional bias: basic and acidic residues. Disordered regions lie at residues 34-58 (EHSV…APNK), 246-271 (SVTQ…FTKP), 484-524 (FQSS…TGNQ), and 547-567 (SCTD…SQKV). Composition is skewed to polar residues over residues 247–267 (VTQP…SQHA) and 484–500 (FQSS…NENI). Composition is skewed to basic and acidic residues over residues 503–517 (LPEK…HGEI) and 547–560 (SCTD…KDNP). A required for macropage invasion region spans residues 749–806 (LLGNFEESVLNYRFEPLGVVEGFTAEVGASGIFCPTHMTLPVKVSFYSVSDDNAPSPY). The interval 833-841 (FNPNKTVVK) is transactivation domain 2 (TAD2).

It belongs to the ATOS family.

It localises to the nucleus. Functionally, transcription regulator that syncronizes transcriptional and translational programs to promote macrophage invasion of tissues. This chain is Atos homolog protein A (atosa), found in Xenopus tropicalis (Western clawed frog).